The following is a 457-amino-acid chain: Gustatory and odorant receptor 24 (457 aa).

The Cytoplasmic segment spans residues 1–115; sequence MSLYFNADTM…GGTAFVLASP (115 aa). The chain crosses the membrane as a helical span at residues 116–136; it reads SMTYCVLFFLLLTVYIAFILL. Over 137-152 the chain is Extracellular; sequence NRIEIVRTLEGRFEES. A helical membrane pass occupies residues 153–173; it reads VIAYLFIVNILPILIIPLMWY. Over 174 to 209 the chain is Cytoplasmic; it reads ESRKVVSVVNGWVDFETVYRETTGRALELRLRTKAQ. A helical transmembrane segment spans residues 210–230; that stretch reads VIAILLPILCSLSVAITHVTM. Topologically, residues 231-237 are extracellular; sequence VDFKLLQ. The helical transmembrane segment at 238-258 threads the bilayer; the sequence is VIPYCVLDTITYMMGGYWYMA. The Cytoplasmic portion of the chain corresponds to 259-309; sequence CETLSITAKILAEDFQRALRHVGPAAKVSEYRSLWLRLSKLARDTGFSTCY. A helical membrane pass occupies residues 310–330; sequence TFTFICLYLFFIITLSIYGLM. Topologically, residues 331–341 are extracellular; it reads SQISDGFGVKD. The helical transmembrane segment at 342–362 threads the bilayer; the sequence is IGLAVTAFCSVGLLFYICDEA. At 363–421 the chain is on the cytoplasmic side; it reads HYASFNVRTNFQKKLLMVELSWMNTDAQTEINMFLRATEMNPSSINLGGFFDVNRTLFK. A helical transmembrane segment spans residues 422 to 442; the sequence is SLLATMVTYLVVLLQFQISIP. The Extracellular portion of the chain corresponds to 443 to 457; the sequence is DEPSAMLMHSNSSHS. A glycan (N-linked (GlcNAc...) asparagine) is linked at asparagine 453.

Belongs to the insect chemoreceptor superfamily. Gustatory receptor (GR) family. Gr21a subfamily. In terms of tissue distribution, carbon dioxide-responsive neurons coexpress GPRgr22 and GPRgr24 in the maxillary palp, at both larval and adult life stages.

Its subcellular location is the cell membrane. Gustatory receptor which mediates acceptance or avoidance behavior, depending on its substrates. GPRgr22 and GPRgr24 together are sufficient for olfactory carbon dioxide-chemosensation. The polypeptide is Gustatory and odorant receptor 24 (Anopheles gambiae (African malaria mosquito)).